The following is an 893-amino-acid chain: Major vault protein (893 aa).

Ala2 bears the N-acetylalanine mark. 9 MVP repeats span residues 2-56, 57-111, 112-164, 165-217, 218-272, 273-323, 324-379, 380-457, and 458-520; these read ATEE…VPPR, HYCT…DITP, LQVV…EIIQ, ATII…DLVD, AVIL…GVVP, ITTL…IQDV, YVLS…ERQA, IPLD…KTRV, and VSYR…LLGP. Residue Lys444 forms a Glycyl lysine isopeptide (Lys-Gly) (interchain with G-Cter in SUMO2) linkage. At Ser445 the chain carries Phosphoserine. Lys704 participates in a covalent cross-link: Glycyl lysine isopeptide (Lys-Gly) (interchain with G-Cter in SUMO2). A disordered region spans residues 856-893; it reads QPLGRRVASGPSPGEGISPQSAQAPQAPGDNHVVPVLR.

In terms of assembly, the vault ribonucleoprotein particle is a huge (400 A x 670 A) cage structure of 12.9 MDa. It consists of a dimer of half-vaults, with each half-vault comprising 39 identical major vault protein (MVP) chains, PARP4 and one or more vault RNAs (vRNAs). Interacts with TEP1. Interacts with PTEN and activated MAPK1. The phosphorylated protein interacts with the SH2 domains of PTPN11 and SRC. Interacts with APEX1. May interact with ZNF540. Post-translationally, phosphorylated on Tyr residues after EGF stimulation. In terms of processing, dephosphorylated by PTPN11. In terms of tissue distribution, present in most normal tissues. Higher expression observed in epithelial cells with secretory and excretory functions, as well as in cells chronically exposed to xenobiotics, such as bronchial cells and cells lining the intestine. Overexpressed in many multidrug-resistant cancer cells.

The protein resides in the cytoplasm. Its subcellular location is the nucleus. The protein localises to the nuclear pore complex. It is found in the perinuclear region. In terms of biological role, required for normal vault structure. Vaults are multi-subunit structures that may act as scaffolds for proteins involved in signal transduction. Vaults may also play a role in nucleo-cytoplasmic transport. Down-regulates IFNG-mediated STAT1 signaling and subsequent activation of JAK. Down-regulates SRC activity and signaling through MAP kinases. The polypeptide is Major vault protein (MVP) (Homo sapiens (Human)).